The following is a 567-amino-acid chain: NADH-ubiquinone oxidoreductase chain 2 (567 aa).

14 consecutive transmembrane segments (helical) span residues 2–22 (LILSLFILIIYSSIINNIDTI), 43–63 (IGIIIILYSLYIFKDISLSYI), 85–105 (NIFNIYIIFLLLIVIISLLSI), 133–153 (LNIYYISIIIFNIIGLILLLT), 158–178 (ISIFISIELQSYSLYILTGII), 189–209 (LFYYLIGGIGSIIILYGISLL), 236–256 (ILIGWLFIIIGLLIKIGAAPM), 274–294 (YISLIPKISILSYILLIILNL), 312–332 (LIYILSIIIILSLIIGSIGGL), 340–360 (ILAYSGLLNIGYFLLIILSLI), 372–392 (IIYITQYCFNHISIFILLIIA), 423–443 (LIFCLIIIIGSFIGIPPLFGF), 459–479 (LFLSLLLIISSIISSIYYLYF), and 530–550 (VGNYITYILSSYILIILFNFI).

The protein belongs to the complex I subunit 2 family.

Its subcellular location is the mitochondrion inner membrane. It carries out the reaction a ubiquinone + NADH + 5 H(+)(in) = a ubiquinol + NAD(+) + 4 H(+)(out). In terms of biological role, core subunit of the mitochondrial membrane respiratory chain NADH dehydrogenase (Complex I) that is believed to belong to the minimal assembly required for catalysis. Complex I functions in the transfer of electrons from NADH to the respiratory chain. The immediate electron acceptor for the enzyme is believed to be ubiquinone. This Wickerhamomyces canadensis (Yeast) protein is NADH-ubiquinone oxidoreductase chain 2 (ND2).